A 501-amino-acid chain; its full sequence is Lysine--tRNA ligase (501 aa).

Residues Glu406 and Glu413 each coordinate Mg(2+).

The protein belongs to the class-II aminoacyl-tRNA synthetase family. As to quaternary structure, homodimer. Mg(2+) is required as a cofactor.

It is found in the cytoplasm. The catalysed reaction is tRNA(Lys) + L-lysine + ATP = L-lysyl-tRNA(Lys) + AMP + diphosphate. This is Lysine--tRNA ligase (lysS) from Halalkalibacterium halodurans (strain ATCC BAA-125 / DSM 18197 / FERM 7344 / JCM 9153 / C-125) (Bacillus halodurans).